A 523-amino-acid chain; its full sequence is Protein tweety homolog 3 (523 aa).

Topologically, residues 1–42 (MAGVSYAAPWWVSLLHRLPHFDLSWEATSSQFRPEDTDYQQA) are extracellular. Residues 43-63 (LLLLGAAALACLALDLLFLLF) traverse the membrane as a helical segment. Residues 64–86 (YSFWLCCRRRKSEEHLDADCCCT) are Cytoplasmic-facing. Residues 87 to 107 (AWCVIIATLVCSAGIAVGFYG) traverse the membrane as a helical segment. At 108–211 (NGETSDGIHR…VDLYDWYRWL (104 aa)) the chain is on the extracellular side. Ca(2+) is bound by residues Glu-110 and Asp-113. Asn-126 and Asn-144 each carry an N-linked (GlcNAc...) asparagine glycan. Residues 212 to 232 (GYLGLLLLDVIICLLVLVGLI) traverse the membrane as a helical segment. Residues 233 to 236 (RSSK) lie on the Cytoplasmic side of the membrane. A helical membrane pass occupies residues 237 to 257 (GILVGVCLLGVLALVISWGAL). Residues 258–386 (GLELAVSVGS…LTGFCYDGVE (129 aa)) are Extracellular-facing. Disulfide bonds link Cys-271–Cys-381 and Cys-299–Cys-366. A glycan (N-linked (GlcNAc...) asparagine) is linked at Asn-351. Residues 387–407 (GLIYLALFSFVTALMFSSIVC) traverse the membrane as a helical segment. Residues 408 to 523 (SVPHTWQQKR…QPRPDSSGSH (116 aa)) lie on the Cytoplasmic side of the membrane. 2 disordered regions span residues 413-435 (WQQK…RQAH) and 482-523 (QNPR…SGSH). The residue at position 496 (Ser-496) is a Phosphoserine. The PY-motif; mediates interaction with NEDD4L motif lies at 498-501 (PPSY). Over residues 501–523 (YTSSMRAKYLATSQPRPDSSGSH) the composition is skewed to polar residues. Phosphoserine occurs at positions 504 and 522.

It belongs to the tweety family. Homotetramer; disulfide-linked. Homodimer. Interacts with NEDD4L. Ubiquitinated by NEDD4L. Post-translationally, N-Glycosylated. Contains high-mannose, hybrid and complex oligosaccharides. As to expression, expressed in excitable tissues. Expressed in the brain, heart, skeletal muscle, colon, spleen, kidney and peripheral blood leukocytes.

Its subcellular location is the cell membrane. It catalyses the reaction chloride(in) = chloride(out). The catalysed reaction is L-glutamate(out) = L-glutamate(in). Calcium-independent, swelling-dependent volume-regulated anion channel (VRAC-swell) which plays a pivotal role in the process of regulatory volume decrease (RVD) in the brain through the efflux of anions like chloride and organic osmolytes like glutamate. Probable large-conductance Ca(2+)-activated chloride channel. The polypeptide is Protein tweety homolog 3 (TTYH3) (Homo sapiens (Human)).